Here is a 62-residue protein sequence, read N- to C-terminus: Large ribosomal subunit protein bL28 (62 aa).

Belongs to the bacterial ribosomal protein bL28 family.

This Parafrankia sp. (strain EAN1pec) protein is Large ribosomal subunit protein bL28.